Here is a 343-residue protein sequence, read N- to C-terminus: DNA-directed RNA polymerase subunit alpha (343 aa).

The segment at 1–236 (MQEHYYKFWR…EQLQIFLTFD (236 aa)) is alpha N-terminal domain (alpha-NTD). Residues 253–343 (LNENLFRSVD…QPPQKRETQQ (91 aa)) form an alpha C-terminal domain (alpha-CTD) region.

It belongs to the RNA polymerase alpha chain family. Homodimer. The RNAP catalytic core consists of 2 alpha, 1 beta, 1 beta' and 1 omega subunit. When a sigma factor is associated with the core the holoenzyme is formed, which can initiate transcription.

It catalyses the reaction RNA(n) + a ribonucleoside 5'-triphosphate = RNA(n+1) + diphosphate. DNA-dependent RNA polymerase catalyzes the transcription of DNA into RNA using the four ribonucleoside triphosphates as substrates. The sequence is that of DNA-directed RNA polymerase subunit alpha from Bdellovibrio bacteriovorus (strain ATCC 15356 / DSM 50701 / NCIMB 9529 / HD100).